Consider the following 729-residue polypeptide: Pentatricopeptide repeat-containing protein At5g01110 (729 aa).

The interval T26–A45 is disordered. Residues S27–A45 are compositionally biased toward low complexity. PPR repeat units follow at residues T112–R147, N164–V198, S199–I233, N234–P268, D269–P303, G304–P338, D339–P373, D374–P408, D409–M443, D444–P478, D479–L513, D514–P548, T549–P583, T584–P618, D619–E649, D656–P690, and D691–P725.

Belongs to the PPR family. P subfamily.

The protein is Pentatricopeptide repeat-containing protein At5g01110 of Arabidopsis thaliana (Mouse-ear cress).